The following is a 413-amino-acid chain: Chemotactic signal transduction system substrate-binding protein BasB (413 aa).

Residues 1–31 (MHSTTRREWLGAIGATAATGLAGCAGVGGAG) form the signal peptide.

It is found in the cell membrane. In terms of biological role, mediates chemotaxis towards five attractant amino acids (leucine, isoleucine, valine, methionine and cysteine). May function as a receptor that binds the amino acids and transduces a signal to BasT. Has probably no additional role in transport. The protein is Chemotactic signal transduction system substrate-binding protein BasB (basB) of Halobacterium salinarum (strain ATCC 29341 / DSM 671 / R1).